Consider the following 925-residue polypeptide: Translation initiation factor IF-2 (925 aa).

The tract at residues 190-329 (PAAPTSEAAP…RRRDEREAAV (140 aa)) is disordered. Composition is skewed to pro residues over residues 199 to 209 (PPEPEPTPLPA), 217 to 238 (PVRP…PAPR), and 279 to 288 (RPVPAQPAPQ). Residues 289 to 307 (TPTRSGSGIAKKGAITKAG) are compositionally biased toward low complexity. A compositionally biased stretch (basic and acidic residues) spans 320-329 (RRRDEREAAV). The 173-residue stretch at 417-589 (VRPPVVTIMG…LLLVADYELE (173 aa)) folds into the tr-type G domain. Residues 426–433 (GHVDHGKT) form a G1 region. Residue 426–433 (GHVDHGKT) participates in GTP binding. Residues 451–455 (GITQH) are G2. Positions 476 to 479 (DTPG) are G3. GTP contacts are provided by residues 476-480 (DTPGH) and 530-533 (NKVD). A G4 region spans residues 530-533 (NKVD). Positions 566–568 (SAK) are G5.

It belongs to the TRAFAC class translation factor GTPase superfamily. Classic translation factor GTPase family. IF-2 subfamily.

The protein resides in the cytoplasm. Functionally, one of the essential components for the initiation of protein synthesis. Protects formylmethionyl-tRNA from spontaneous hydrolysis and promotes its binding to the 30S ribosomal subunits. Also involved in the hydrolysis of GTP during the formation of the 70S ribosomal complex. The protein is Translation initiation factor IF-2 of Gloeobacter violaceus (strain ATCC 29082 / PCC 7421).